Here is a 470-residue protein sequence, read N- to C-terminus: Tubulin gamma chain (470 aa).

144–150 (AGGTGSG) lines the GTP pocket.

Belongs to the tubulin family.

The protein localises to the cytoplasm. The protein resides in the cytoskeleton. Its subcellular location is the microtubule organizing center. It localises to the spindle pole body. Its function is as follows. Tubulin is the major constituent of microtubules. The gamma chain is found at microtubule organizing centers (MTOC) such as the spindle poles or the centrosome, suggesting that it is involved in the minus-end nucleation of microtubule assembly. The sequence is that of Tubulin gamma chain (TUB4) from Eremothecium gossypii (strain ATCC 10895 / CBS 109.51 / FGSC 9923 / NRRL Y-1056) (Yeast).